The primary structure comprises 124 residues: Ribonuclease pancreatic (124 aa).

Substrate is bound by residues lysine 7 and arginine 10. Catalysis depends on histidine 12, which acts as the Proton acceptor. Cystine bridges form between cysteine 26–cysteine 84, cysteine 40–cysteine 95, cysteine 58–cysteine 110, and cysteine 65–cysteine 72. Residue asparagine 34 is glycosylated (N-linked (GlcNAc...) asparagine). Substrate-binding positions include 41–45, lysine 66, and arginine 85; that span reads KPVNT. Histidine 119 serves as the catalytic Proton donor.

Belongs to the pancreatic ribonuclease family. Monomer. Interacts with and forms tight 1:1 complexes with RNH1. Dimerization of two such complexes may occur. Interaction with RNH1 inhibits this protein. In terms of tissue distribution, pancreas.

The protein resides in the secreted. It catalyses the reaction an [RNA] containing cytidine + H2O = an [RNA]-3'-cytidine-3'-phosphate + a 5'-hydroxy-ribonucleotide-3'-[RNA].. The enzyme catalyses an [RNA] containing uridine + H2O = an [RNA]-3'-uridine-3'-phosphate + a 5'-hydroxy-ribonucleotide-3'-[RNA].. Its function is as follows. Endonuclease that catalyzes the cleavage of RNA on the 3' side of pyrimidine nucleotides. Acts on single-stranded and double-stranded RNA. The sequence is that of Ribonuclease pancreatic (RNASE1) from Eudorcas thomsonii (Thomson's gazelle).